Here is a 261-residue protein sequence, read N- to C-terminus: Chloroplastic import inner membrane translocase subunit HP30-1 (261 aa).

Helical transmembrane passes span 59–77 (AAVV…GGLM), 113–129 (NFAA…SVMK), 139–155 (SAVV…SLVS), and 163–180 (MNAI…GVFF).

It belongs to the Tim17/Tim22/Tim23 family. Probable component of a protein-conducting channel made of HP30-1, HP30-2 and HP20 that mediates the import of transit sequence-less proteins into the chloroplastic inner membrane. Interacts with CEQORH.

The protein resides in the plastid. Its subcellular location is the chloroplast inner membrane. Functionally, together with HP30-2 and HP20, triggers the import and insertion of transit sequence-less multi-pass transmembrane proteins (e.g. CEQORH) into the chloroplastic inner membrane. This chain is Chloroplastic import inner membrane translocase subunit HP30-1, found in Arabidopsis thaliana (Mouse-ear cress).